The chain runs to 99 residues: MIKSELVQIVAARNPHLYHRDVENIVNAVLDEITDALAAGNRVELRGFGAFSVKNRPSRSGRNPRTGDTVFVEEKWVPFFKTGKELRERLNPGQADEED.

The protein belongs to the bacterial histone-like protein family. Heterodimer of an alpha and a beta chain.

Functionally, this protein is one of the two subunits of integration host factor, a specific DNA-binding protein that functions in genetic recombination as well as in transcriptional and translational control. The chain is Integration host factor subunit beta from Rhizobium etli (strain CIAT 652).